We begin with the raw amino-acid sequence, 328 residues long: tRNA uridine(34) hydroxylase (328 aa).

The Rhodanese domain occupies Leu130–Glu224. The active-site Cysteine persulfide intermediate is Cys184.

It belongs to the TrhO family.

The enzyme catalyses uridine(34) in tRNA + AH2 + O2 = 5-hydroxyuridine(34) in tRNA + A + H2O. Catalyzes oxygen-dependent 5-hydroxyuridine (ho5U) modification at position 34 in tRNAs. The protein is tRNA uridine(34) hydroxylase of Streptococcus agalactiae serotype Ia (strain ATCC 27591 / A909 / CDC SS700).